A 526-amino-acid polypeptide reads, in one-letter code: Opine oxidase subunit A (526 aa).

[2Fe-2S] cluster-binding residues include cysteine 396, cysteine 398, cysteine 431, and cysteine 436.

To T-protein and to dimethylglycine dehydrogenase. In terms of assembly, heterodimer of a subunit A and a subunit B. [2Fe-2S] cluster is required as a cofactor.

It functions in the pathway opine metabolism; octopine degradation. Oxidative cleavage of octopine into L-arginine and pyruvate. In Rhizobium meliloti (Ensifer meliloti), this protein is Opine oxidase subunit A (ooxA).